The following is a 386-amino-acid chain: MAEEDLYDVLGVKKDASEAEIKRAYRKLAAKYHPDVNHEPGAEKKFKKINEAYETLSDDQKRAQYDQFGTTGSQAGGFGGQGGFGGFGQGGFSQGGFGDFSDIFGDIFGGGRARRDPSAPQQGRDLQYTMTLDFMDAVFGKETSIKYNRSAECHTCHGSGAKPGKSAHTCSTCHGQGYVLRQRQTMMGMMQSQEVCPTCGGKGQVIDPADQCDTCHGAGVTEERHELKVKVPQGIDDGQQMRLQGQGEAGKNGGPYGDLYIVFRVTPSRDFKRDGNTIYVDQDISISQATLGDHVQAKTVHGDVDLKIPAGTQSETKFRLRGKGVPRVNGNGNGDEYVTVHVKTPKTLNKRQREAMLAFAAASGEDVKGVKAGFFDKLKDAFEDNK.

One can recognise a J domain in the interval 5-69 (DLYDVLGVKK…QKRAQYDQFG (65 aa)). A CR-type zinc finger spans residues 140–224 (GKETSIKYNR…CHGAGVTEER (85 aa)). The Zn(2+) site is built by Cys153, Cys156, Cys170, Cys173, Cys196, Cys199, Cys212, and Cys215. CXXCXGXG motif repeat units lie at residues 153-160 (CHTCHGSG), 170-177 (CSTCHGQG), 196-203 (CPTCGGKG), and 212-219 (CDTCHGAG).

It belongs to the DnaJ family. As to quaternary structure, homodimer. It depends on Zn(2+) as a cofactor.

The protein localises to the cytoplasm. Participates actively in the response to hyperosmotic and heat shock by preventing the aggregation of stress-denatured proteins and by disaggregating proteins, also in an autonomous, DnaK-independent fashion. Unfolded proteins bind initially to DnaJ; upon interaction with the DnaJ-bound protein, DnaK hydrolyzes its bound ATP, resulting in the formation of a stable complex. GrpE releases ADP from DnaK; ATP binding to DnaK triggers the release of the substrate protein, thus completing the reaction cycle. Several rounds of ATP-dependent interactions between DnaJ, DnaK and GrpE are required for fully efficient folding. Also involved, together with DnaK and GrpE, in the DNA replication of plasmids through activation of initiation proteins. In Limosilactobacillus fermentum (strain NBRC 3956 / LMG 18251) (Lactobacillus fermentum), this protein is Chaperone protein DnaJ.